Here is a 167-residue protein sequence, read N- to C-terminus: G/U mismatch-specific DNA glycosylase (167 aa).

It belongs to the uracil-DNA glycosylase (UDG) superfamily. TDG/mug family. In terms of assembly, binds DNA as a monomer.

It is found in the cytoplasm. The catalysed reaction is Specifically hydrolyzes mismatched double-stranded DNA and polynucleotides, releasing free uracil.. In terms of biological role, excises ethenocytosine and uracil, which can arise by alkylation or deamination of cytosine, respectively, from the corresponding mispairs with guanine in ds-DNA. It is capable of hydrolyzing the carbon-nitrogen bond between the sugar-phosphate backbone of the DNA and the mispaired base. The complementary strand guanine functions in substrate recognition. Required for DNA damage lesion repair in stationary-phase cells. This chain is G/U mismatch-specific DNA glycosylase, found in Pectobacterium carotovorum subsp. carotovorum (strain PC1).